We begin with the raw amino-acid sequence, 207 residues long: Proteasome subunit beta (207 aa).

The propeptide at 1-9 (MSNKNTFEG) is removed in mature form; by autocatalysis. The Nucleophile role is filled by T10.

The protein belongs to the peptidase T1B family. As to quaternary structure, the 20S proteasome core is composed of 14 alpha and 14 beta subunits that assemble into four stacked heptameric rings, resulting in a barrel-shaped structure. The two inner rings, each composed of seven catalytic beta subunits, are sandwiched by two outer rings, each composed of seven alpha subunits. The catalytic chamber with the active sites is on the inside of the barrel. Has a gated structure, the ends of the cylinder being occluded by the N-termini of the alpha-subunits. Is capped at one or both ends by the proteasome regulatory ATPase, PAN.

The protein localises to the cytoplasm. It catalyses the reaction Cleavage of peptide bonds with very broad specificity.. With respect to regulation, the formation of the proteasomal ATPase PAN-20S proteasome complex, via the docking of the C-termini of PAN into the intersubunit pockets in the alpha-rings, triggers opening of the gate for substrate entry. Interconversion between the open-gate and close-gate conformations leads to a dynamic regulation of the 20S proteasome proteolysis activity. Component of the proteasome core, a large protease complex with broad specificity involved in protein degradation. This Methanobrevibacter ruminantium (strain ATCC 35063 / DSM 1093 / JCM 13430 / OCM 146 / M1) (Methanobacterium ruminantium) protein is Proteasome subunit beta.